A 60-amino-acid chain; its full sequence is Mastoparan-B (60 aa).

The N-terminal stretch at 1 to 27 (MKNTILILFTAFIALLGFFGMSAEALA) is a signal peptide. 4 AXPX repeats span residues 27-30 (ADPL), 31-34 (AEPL), 35-38 (ADPN), and 41-44 (ADPE). A propeptide spanning residues 28 to 45 (DPLAEPLADPNAEADPEA) is cleaved from the precursor. Leucine amide is present on Leu59.

This sequence belongs to the MCD family. Mastoparan subfamily. In terms of tissue distribution, expressed by the venom gland.

The protein localises to the secreted. It localises to the target cell membrane. Antimicrobial and mast cell degranulating peptide. Has broad spectrum antibacterial activity against both Gram-positive (S.aureus MIC=96-128 ug/ml, S.xylosus MIC=2 ug/ml, S.alactolyticus MIC=32 ug/ml, and S.choleraesuis MIC=32 ug/ml) and Gram-negative bacteria (C.koseri MIC=6 ug/ml, E.coli MIC=3-16 ug/ml, K.pneumoniae MIC=128 ug/ml, P.aerugiosa MIC=128 ug/ml, S.typhimurium MIC=64 ug/ml, V.parahamelytics MIC=32 ug/ml, and S.enterica), as well as on fungi (C.albicans, C.glabrata, and C.neoformans). Does not show antimicrobial activity against S.mutans. Affects membrane permeability of E.coli. Also acts as a mast cell degranulating peptide, that causes liberation of histamine from rat peritoneal mast cells. Its mast cell degranulation activity may be related to the activation of G-protein coupled receptors in mast cells as well as interaction with other proteins located in cell endosomal membranes in the mast cells. Whether this peptide shows hemolytic activities is controversial, as Lin et al., 2011 and Ho et al., 1991 found a hemolytic activity on sheep, chicken and human erythrocytes, whereas Kim et al., 2016 found no hemolytic activity on human erythrocytes. In vivo, induces edema in the rat paw. In Vespa basalis (Hornet), this protein is Mastoparan-B.